Here is a 272-residue protein sequence, read N- to C-terminus: Ribosomal RNA small subunit methyltransferase A (272 aa).

Residues Asn-18, Leu-20, Gly-45, Glu-66, Asp-91, and Asn-113 each coordinate S-adenosyl-L-methionine.

The protein belongs to the class I-like SAM-binding methyltransferase superfamily. rRNA adenine N(6)-methyltransferase family. RsmA subfamily.

It localises to the cytoplasm. It carries out the reaction adenosine(1518)/adenosine(1519) in 16S rRNA + 4 S-adenosyl-L-methionine = N(6)-dimethyladenosine(1518)/N(6)-dimethyladenosine(1519) in 16S rRNA + 4 S-adenosyl-L-homocysteine + 4 H(+). Specifically dimethylates two adjacent adenosines (A1518 and A1519) in the loop of a conserved hairpin near the 3'-end of 16S rRNA in the 30S particle. May play a critical role in biogenesis of 30S subunits. The protein is Ribosomal RNA small subunit methyltransferase A of Pectobacterium atrosepticum (strain SCRI 1043 / ATCC BAA-672) (Erwinia carotovora subsp. atroseptica).